Reading from the N-terminus, the 873-residue chain is Rho GTPase-activating protein gacJJ (873 aa).

Residues 64–147 form a disordered region; that stretch reads DEPSSINTSS…NVNNSSNAPT (84 aa). Residues 66-91 show a composition bias toward low complexity; it reads PSSINTSSGNIGSNNNSSSNTPLTGS. Residues 103-112 show a composition bias toward gly residues; the sequence is IGGGGGGGDN. A compositionally biased stretch (low complexity) spans 113–144; sequence GITNSGNIGSSSNSDLKKSTSSGIVNVNNSSN. The PH domain occupies 301–402; it reads NPVREGYLKK…WTVLPIVIES (102 aa). The region spanning 428 to 621 is the Rho-GAP domain; that stretch reads VPIEKTVSGN…SLIRDYQYIF (194 aa). The region spanning 628 to 694 is the SH3 domain; sequence EQKILAKSLY…PASYVELLPH (67 aa). Residues 715–761 are a coiled coil; the sequence is MLEMESTKTKNQEIDKNIKQLEITKKELESTINDLENEKAALENDPT.

The protein localises to the cytoplasm. Functionally, rho GTPase-activating protein involved in the signal transduction pathway. This chain is Rho GTPase-activating protein gacJJ (gacJJ), found in Dictyostelium discoideum (Social amoeba).